Consider the following 313-residue polypeptide: Ribosomal RNA small subunit methyltransferase H (313 aa).

S-adenosyl-L-methionine-binding positions include glycine 35–histidine 37, aspartate 55, phenylalanine 79, aspartate 100, and glutamine 107.

Belongs to the methyltransferase superfamily. RsmH family.

It localises to the cytoplasm. It catalyses the reaction cytidine(1402) in 16S rRNA + S-adenosyl-L-methionine = N(4)-methylcytidine(1402) in 16S rRNA + S-adenosyl-L-homocysteine + H(+). Functionally, specifically methylates the N4 position of cytidine in position 1402 (C1402) of 16S rRNA. The polypeptide is Ribosomal RNA small subunit methyltransferase H (Burkholderia mallei (strain NCTC 10247)).